A 201-amino-acid polypeptide reads, in one-letter code: Glutathione peroxidase 1 (201 aa).

Serine 32 carries the phosphoserine modification. The active site involves selenocysteine 47. Position 47 (selenocysteine 47) is a non-standard amino acid, selenocysteine. 2 positions are modified to N6-acetyllysine; alternate: lysine 86 and lysine 112. 2 positions are modified to N6-succinyllysine; alternate: lysine 86 and lysine 112. The residue at position 119 (lysine 119) is an N6-acetyllysine. An N6-acetyllysine; alternate modification is found at lysine 146. Lysine 146 is modified (N6-succinyllysine; alternate). Serine 195 and serine 199 each carry phosphoserine.

Belongs to the glutathione peroxidase family. In terms of assembly, homotetramer. Interacts with MIEN1. In terms of processing, during periods of oxidative stress, Sec-47 may react with a superoxide radical, irreversibly lose hydroselenide and be converted to dehydroalanine. As to expression, expressed in liver and lung.

The protein localises to the cytoplasm. The protein resides in the mitochondrion. It catalyses the reaction 2 glutathione + H2O2 = glutathione disulfide + 2 H2O. The enzyme catalyses a hydroperoxy polyunsaturated fatty acid + 2 glutathione = a hydroxy polyunsaturated fatty acid + glutathione disulfide + H2O. The catalysed reaction is tert-butyl hydroperoxide + 2 glutathione = tert-butanol + glutathione disulfide + H2O. It carries out the reaction cumene hydroperoxide + 2 glutathione = 2-phenylpropan-2-ol + glutathione disulfide + H2O. It catalyses the reaction (13S)-hydroperoxy-(9Z,11E)-octadecadienoate + 2 glutathione = (13S)-hydroxy-(9Z,11E)-octadecadienoate + glutathione disulfide + H2O. The enzyme catalyses (9S)-hydroperoxy-(10E,12Z)-octadecadienoate + 2 glutathione = (9S)-hydroxy-(10E,12Z)-octadecadienoate + glutathione disulfide + H2O. The catalysed reaction is (5S)-hydroperoxy-(6E,8Z,11Z,14Z)-eicosatetraenoate + 2 glutathione = (5S)-hydroxy-(6E,8Z,11Z,14Z)-eicosatetraenoate + glutathione disulfide + H2O. It carries out the reaction (12S)-hydroperoxy-(5Z,8Z,10E,14Z)-eicosatetraenoate + 2 glutathione = (12S)-hydroxy-(5Z,8Z,10E,14Z)-eicosatetraenoate + glutathione disulfide + H2O. It catalyses the reaction (12R)-hydroperoxy-(5Z,8Z,10E,14Z)-eicosatetraenoate + 2 glutathione = (12R)-hydroxy-(5Z,8Z,10E,14Z)-eicosatetraenoate + glutathione disulfide + H2O. The enzyme catalyses (15S)-hydroperoxy-(5Z,8Z,11Z,13E)-eicosatetraenoate + 2 glutathione = (15S)-hydroxy-(5Z,8Z,11Z,13E)-eicosatetraenoate + glutathione disulfide + H2O. The catalysed reaction is (5S)-hydroperoxy-(6E,8Z,11Z,14Z,17Z)-eicosapentaenoate + 2 glutathione = (5S)-hydroxy-(6E,8Z,11Z,14Z,17Z)-eicosapentaenoate + glutathione disulfide + H2O. It carries out the reaction (12S)-hydroperoxy-(5Z,8Z,10E,14Z,17Z)-eicosapentaenoate + 2 glutathione = (12S)-hydroxy-(5Z,8Z,10E,14Z,17Z)-eicosapentaenoate + glutathione disulfide + H2O. It catalyses the reaction (15S)-hydroperoxy-(5Z,8Z,11Z,13E,17Z)-eicosapentaenoate + 2 glutathione = (15S)-hydroxy-(5Z,8Z,11Z,13E,17Z)-eicosapentaenoate + glutathione disulfide + H2O. The enzyme catalyses (15S)-hydroperoxy-(11Z,13E)-eicosadienoate + 2 glutathione = (15S)-hydroxy-(11Z,13E)-eicosadienoate + glutathione disulfide + H2O. The catalysed reaction is (17S)-hydroperoxy-(4Z,7Z,10Z,13Z,15E,19Z)-docosahexaenoate + 2 glutathione = (17S)-hydroxy-(4Z,7Z,10Z,13Z,15E,19Z)-docosahexaenoate + glutathione disulfide + H2O. In terms of biological role, catalyzes the reduction of hydroperoxides in a glutathione-dependent manner thus regulating cellular redox homeostasis. Can reduce small soluble hydroperoxides such as H2O2, cumene hydroperoxide and tert-butyl hydroperoxide, as well as several fatty acid-derived hydroperoxides. In platelets catalyzes the reduction of 12-hydroperoxyeicosatetraenoic acid, the primary product of the arachidonate 12-lipoxygenase pathway. The chain is Glutathione peroxidase 1 from Rattus norvegicus (Rat).